We begin with the raw amino-acid sequence, 240 residues long: Probable Ni/Fe-hydrogenase B-type cytochrome subunit (240 aa).

Transmembrane regions (helical) follow at residues 31-51 (LWHW…YFIG), 75-95 (FAAG…AFVG), 142-163 (LAMF…FALY), and 196-213 (LGMW…YLAV).

The protein belongs to the HupC/HyaC/HydC family.

It is found in the cell membrane. In terms of biological role, probable b-type cytochrome. The sequence is that of Probable Ni/Fe-hydrogenase B-type cytochrome subunit (hoxZ) from Azotobacter vinelandii.